Reading from the N-terminus, the 84-residue chain is Small ribosomal subunit protein bS20 (84 aa).

The interval 1 to 28 (MPNIKSAIKRVKTAETRNSRNASQRSAM) is disordered.

Belongs to the bacterial ribosomal protein bS20 family.

Functionally, binds directly to 16S ribosomal RNA. The sequence is that of Small ribosomal subunit protein bS20 from Listeria monocytogenes serotype 4b (strain CLIP80459).